The primary structure comprises 80 residues: Small pacifastin protease inhibitor (80 aa).

The N-terminal stretch at 1-24 (MSKVLKVGLLLLLVAVAASAYAVA) is a signal peptide. A propeptide spanning residues 25-47 (EENGAPKENKQLPQIDDYGVTNK) is cleaved from the precursor. In terms of domain architecture, Pacifastin spans 45–80 (TNKCPANQPFKWNCNYCTCGPEGKDASCTRMACPQH). 3 disulfides stabilise this stretch: cysteine 48–cysteine 63, cysteine 58–cysteine 77, and cysteine 61–cysteine 72.

This sequence belongs to the protease inhibitor I19 family. Expressed in the venom apparatus. Low transcript levels are also detected in other tissues.

Its subcellular location is the secreted. Its function is as follows. Parasitic wasp protein that may interfere with the host immune response. The recombinant protein inhibits trypsin activity and prophenoloxidase (PPO) activation, an enzyme essential for both clotting and insect innate immune responses. It does not inhibit activity of chymotrypsin and protease K, and has no effect on phenoloxidase (PO) activity. In Nasonia vitripennis (Parasitic wasp), this protein is Small pacifastin protease inhibitor.